The sequence spans 305 residues: Acetyl-coenzyme A carboxylase carboxyl transferase subunit beta (305 aa).

The CoA carboxyltransferase N-terminal domain maps to 25–294; sequence VWTKCDSCGQ…PGNDDVEIRS (270 aa). Zn(2+)-binding residues include Cys-29, Cys-32, Cys-48, and Cys-51. The segment at 29 to 51 adopts a C4-type zinc-finger fold; that stretch reads CDSCGQVLYRAELERNLGVCPKC. The segment at 281-305 is disordered; the sequence is NHPEPGNDDVEIRSDAPSESSQDDA.

Belongs to the AccD/PCCB family. In terms of assembly, acetyl-CoA carboxylase is a heterohexamer composed of biotin carboxyl carrier protein (AccB), biotin carboxylase (AccC) and two subunits each of ACCase subunit alpha (AccA) and ACCase subunit beta (AccD). Zn(2+) is required as a cofactor.

It is found in the cytoplasm. It catalyses the reaction N(6)-carboxybiotinyl-L-lysyl-[protein] + acetyl-CoA = N(6)-biotinyl-L-lysyl-[protein] + malonyl-CoA. The protein operates within lipid metabolism; malonyl-CoA biosynthesis; malonyl-CoA from acetyl-CoA: step 1/1. In terms of biological role, component of the acetyl coenzyme A carboxylase (ACC) complex. Biotin carboxylase (BC) catalyzes the carboxylation of biotin on its carrier protein (BCCP) and then the CO(2) group is transferred by the transcarboxylase to acetyl-CoA to form malonyl-CoA. This chain is Acetyl-coenzyme A carboxylase carboxyl transferase subunit beta, found in Pectobacterium atrosepticum (strain SCRI 1043 / ATCC BAA-672) (Erwinia carotovora subsp. atroseptica).